We begin with the raw amino-acid sequence, 326 residues long: S-methyl-5'-thioadenosine phosphorylase (326 aa).

Phosphate contacts are provided by residues S44, 86 to 87 (RH), and 119 to 120 (SA). M220 contributes to the substrate binding site. Residue T221 participates in phosphate binding. 244-246 (DYD) provides a ligand contact to substrate.

It belongs to the PNP/MTAP phosphorylase family. MTAP subfamily. As to quaternary structure, homohexamer. Dimer of a homotrimer.

The enzyme catalyses S-methyl-5'-thioadenosine + phosphate = 5-(methylsulfanyl)-alpha-D-ribose 1-phosphate + adenine. It participates in amino-acid biosynthesis; L-methionine biosynthesis via salvage pathway; S-methyl-5-thio-alpha-D-ribose 1-phosphate from S-methyl-5'-thioadenosine (phosphorylase route): step 1/1. Functionally, catalyzes the reversible phosphorylation of S-methyl-5'-thioadenosine (MTA) to adenine and 5-methylthioribose-1-phosphate. Involved in the breakdown of MTA, a major by-product of polyamine biosynthesis. Responsible for the first step in the methionine salvage pathway after MTA has been generated from S-adenosylmethionine. Has broad substrate specificity with 6-aminopurine nucleosides as preferred substrates. This is S-methyl-5'-thioadenosine phosphorylase from Synechocystis sp. (strain PCC 6803 / GT-S).